The sequence spans 334 residues: Holliday junction branch migration complex subunit RuvB (334 aa).

The tract at residues 4-186 (ADRLIAPENP…FGITQRLEYY (183 aa)) is large ATPase domain (RuvB-L). ATP is bound by residues I25, R26, G67, K70, T71, T72, 133-135 (EDY), R176, Y186, and R223. A Mg(2+)-binding site is contributed by T71. A small ATPAse domain (RuvB-S) region spans residues 187 to 257 (KIPDLQNIVQ…TADKALNMLD (71 aa)). The tract at residues 260–334 (SKGFDYMDRK…RAYLHFGIEK (75 aa)) is head domain (RuvB-H). Positions 315 and 320 each coordinate DNA.

This sequence belongs to the RuvB family. As to quaternary structure, homohexamer. Forms an RuvA(8)-RuvB(12)-Holliday junction (HJ) complex. HJ DNA is sandwiched between 2 RuvA tetramers; dsDNA enters through RuvA and exits via RuvB. An RuvB hexamer assembles on each DNA strand where it exits the tetramer. Each RuvB hexamer is contacted by two RuvA subunits (via domain III) on 2 adjacent RuvB subunits; this complex drives branch migration. In the full resolvosome a probable DNA-RuvA(4)-RuvB(12)-RuvC(2) complex forms which resolves the HJ.

Its subcellular location is the cytoplasm. It catalyses the reaction ATP + H2O = ADP + phosphate + H(+). Its function is as follows. The RuvA-RuvB-RuvC complex processes Holliday junction (HJ) DNA during genetic recombination and DNA repair, while the RuvA-RuvB complex plays an important role in the rescue of blocked DNA replication forks via replication fork reversal (RFR). RuvA specifically binds to HJ cruciform DNA, conferring on it an open structure. The RuvB hexamer acts as an ATP-dependent pump, pulling dsDNA into and through the RuvAB complex. RuvB forms 2 homohexamers on either side of HJ DNA bound by 1 or 2 RuvA tetramers; 4 subunits per hexamer contact DNA at a time. Coordinated motions by a converter formed by DNA-disengaged RuvB subunits stimulates ATP hydrolysis and nucleotide exchange. Immobilization of the converter enables RuvB to convert the ATP-contained energy into a lever motion, pulling 2 nucleotides of DNA out of the RuvA tetramer per ATP hydrolyzed, thus driving DNA branch migration. The RuvB motors rotate together with the DNA substrate, which together with the progressing nucleotide cycle form the mechanistic basis for DNA recombination by continuous HJ branch migration. Branch migration allows RuvC to scan DNA until it finds its consensus sequence, where it cleaves and resolves cruciform DNA. The chain is Holliday junction branch migration complex subunit RuvB from Vibrio vulnificus (strain YJ016).